Consider the following 658-residue polypeptide: Heat shock protein homolog SSE1 (658 aa).

Residues 614-627 (KRKEEERKSKKENA) show a composition bias toward basic and acidic residues. Residues 614–658 (KRKEEERKSKKENAQEGTSSKPESKEESEAKEDNDEESDVASIDE) are disordered. Acidic residues predominate over residues 642-658 (EAKEDNDEESDVASIDE).

It belongs to the heat shock protein 70 family.

Its subcellular location is the cytoplasm. Functionally, required for normal growth at various temperatures. This chain is Heat shock protein homolog SSE1 (SSE1), found in Encephalitozoon cuniculi (strain GB-M1) (Microsporidian parasite).